Here is a 360-residue protein sequence, read N- to C-terminus: POU domain, class 5, transcription factor 1 (360 aa).

2 disordered regions span residues methionine 1–glycine 48 and proline 86–glutamine 137. A 9aaTAD motif is present at residues histidine 4–serine 12. Residue serine 111 is modified to Phosphoserine; by MAPK. Lysine 123 participates in a covalent cross-link: Glycyl lysine isopeptide (Lys-Gly) (interchain with G-Cter in SUMO). The span at lysine 123 to glutamine 137 shows a compositional bias: basic and acidic residues. Residues aspartate 138 to aspartate 212 form the POU-specific domain. The DNA site is built by arginine 157 and glutamine 164. DNA-binding stretches follow at residues serine 180–arginine 186 and serine 193–asparagine 196. The homeobox DNA-binding region spans arginine 230 to serine 289. Threonine 235 bears the Phosphothreonine mark. Phosphoserine occurs at positions 236, 289, 290, and 355. The segment at arginine 287 to threonine 322 is disordered.

This sequence belongs to the POU transcription factor family. Class-5 subfamily. In terms of assembly, interacts with PKM. Interacts with WWP2. Interacts with UBE2I and ZSCAN10. Interacts with PCGF1. Interacts with ESRRB; recruits ESRRB near the POU5F1-SOX2 element in the NANOG proximal promoter; the interaction is DNA independent. Interacts with MAPK8 and MAPK9; the interaction allows MAPK8 and MAPK9 to phosphorylate POU5F1 on Ser-355. Interacts (when phosphorylated on Ser-355) with FBXW8. Interacts with FBXW4. Interacts with SOX2 and SOX15; binds synergistically with either SOX2 or SOX15 to DNA. Interacts with DDX56. Sumoylation enhances the protein stability, DNA binding and transactivation activity. Sumoylation is required for enhanced YES1 expression. Post-translationally, ubiquitinated; undergoes 'Lys-63'-linked polyubiquitination by WWP2 leading to proteasomal degradation. In terms of processing, ERK1/2-mediated phosphorylation at Ser-111 promotes nuclear exclusion and proteasomal degradation. Phosphorylation at Thr-235 and Ser-236 decrease DNA-binding and alters ability to activate transcription. Expressed in immature oocytes.

The protein resides in the cytoplasm. It is found in the nucleus. Transcription factor that binds to the octamer motif (5'-ATTTGCAT-3'). Forms a trimeric complex with SOX2 or SOX15 on DNA and controls the expression of a number of genes involved in embryonic development such as YES1, FGF4, UTF1 and ZFP206. Critical for early embryogenesis and for embryonic stem cell pluripotency. The protein is POU domain, class 5, transcription factor 1 (POU5F1) of Bos taurus (Bovine).